Here is a 1012-residue protein sequence, read N- to C-terminus: Structural polyprotein (1012 aa).

An a divalent metal cation-binding site is contributed by aspartate 30. The Peptidase S50 domain occupies 513 to 755 (ADKGYEVVAN…AGRQYDLAMA (243 aa)). Serine 652 functions as the Nucleophile in the catalytic mechanism. The active site involves lysine 692. The disordered stretch occupies residues 971 to 1012 (EMKHRNPRRAPPKPKPKPNVPTQRPPGRLGRWIRAVSDEDLE). The span at 975–986 (RNPRRAPPKPKP) shows a compositional bias: basic residues. The interaction with VP1 protein stretch occupies residues 1003–1012 (IRAVSDEDLE).

As to quaternary structure, homotrimer. A central divalent metal stabilizes the VP2 trimer. Interacts with host ITGA4/ITGB1. In terms of assembly, homodimer. Interacts (via C-terminus) with VP1 in the cytoplasm. Interacts with VP2. Specific enzymatic cleavages yield mature proteins. The capsid assembly seems to be regulated by polyprotein processing. The protease VP4 cleaves itself off the polyprotein, thus releasing pre-VP2 and VP3 within the infected cell. During capsid assembly, the C-terminus of pre-VP2 is further processed by VP4, giving rise to VP2, the external capsid protein and three small peptides that all stay closely associated with the capsid.

The protein resides in the virion. Its subcellular location is the host cytoplasm. In terms of biological role, capsid protein VP2 self assembles to form an icosahedral capsid with a T=13 symmetry, about 70 nm in diameter, and consisting of 260 VP2 trimers. The capsid encapsulates the genomic dsRNA. VP2 is also involved in attachment and entry into the host cell by interacting with host ITGA4/ITGB1. Its function is as follows. The precursor of VP2 plays an important role in capsid assembly. First, pre-VP2 and VP2 oligomers assemble to form a procapsid. Then, the pre-VP2 intermediates may be processed into VP2 proteins by proteolytic cleavage mediated by VP4 to obtain the mature virion. The final capsid is composed of pentamers and hexamers but VP2 has a natural tendency to assemble into all-pentameric structures. Therefore pre-VP2 may be required to allow formation of the hexameric structures. Functionally, protease VP4 is a serine protease that cleaves the polyprotein into its final products. Pre-VP2 is first partially cleaved, and may be completely processed by VP4 upon capsid maturation. Capsid protein VP3 plays a key role in virion assembly by providing a scaffold for the capsid made of VP2. May self-assemble to form a T=4-like icosahedral inner-capsid composed of at least 180 trimers. Plays a role in genomic RNA packaging by recruiting VP1 into the capsid and interacting with the dsRNA genome segments to form a ribonucleoprotein complex. Additionally, the interaction of the VP3 C-terminal tail with VP1 removes the inherent structural blockade of the polymerase active site. Thus, VP3 can also function as a transcriptional activator. In terms of biological role, structural peptide 1 is a small peptide derived from pre-VP2 C-terminus. It destabilizes and perforates cell membranes, suggesting a role during entry. Its function is as follows. Structural peptide 2 is a small peptide derived from pre-VP2 C-terminus. It is not essential for the virus viability, but viral growth is affected when missing. Functionally, structural peptide 3 is a small peptide derived from pre-VP2 C-terminus. It is not essential for the virus viability, but viral growth is affected when missing. This chain is Structural polyprotein, found in Avian infectious bursal disease virus (isolate Chicken/UK/UK661/1989) (IBDV).